A 424-amino-acid polypeptide reads, in one-letter code: Histidinol dehydrogenase homolog (424 aa).

The Zn(2+) site is built by Gln-250 and His-253. Residues Glu-318 and His-319 each act as proton acceptor in the active site. Zn(2+)-binding residues include Asp-352 and His-411.

This sequence belongs to the histidinol dehydrogenase family. Zn(2+) serves as cofactor.

The polypeptide is Histidinol dehydrogenase homolog (Shouchella clausii (strain KSM-K16) (Alkalihalobacillus clausii)).